The primary structure comprises 96 residues: uncharacterized protein (96 aa).

A signal peptide spans 1-15 (MRLFILLVALFVICA).

This is an uncharacterized protein from Caenorhabditis elegans.